The following is a 78-amino-acid chain: Exodeoxyribonuclease 7 small subunit (78 aa).

Belongs to the XseB family. As to quaternary structure, heterooligomer composed of large and small subunits.

The protein localises to the cytoplasm. The enzyme catalyses Exonucleolytic cleavage in either 5'- to 3'- or 3'- to 5'-direction to yield nucleoside 5'-phosphates.. Its function is as follows. Bidirectionally degrades single-stranded DNA into large acid-insoluble oligonucleotides, which are then degraded further into small acid-soluble oligonucleotides. This chain is Exodeoxyribonuclease 7 small subunit, found in Synechococcus sp. (strain JA-3-3Ab) (Cyanobacteria bacterium Yellowstone A-Prime).